A 158-amino-acid chain; its full sequence is 3-hydroxyacyl-[acyl-carrier-protein] dehydratase FabZ (158 aa).

H60 is a catalytic residue.

The protein belongs to the thioester dehydratase family. FabZ subfamily.

The protein resides in the cytoplasm. The catalysed reaction is a (3R)-hydroxyacyl-[ACP] = a (2E)-enoyl-[ACP] + H2O. In terms of biological role, involved in unsaturated fatty acids biosynthesis. Catalyzes the dehydration of short chain beta-hydroxyacyl-ACPs and long chain saturated and unsaturated beta-hydroxyacyl-ACPs. This Zymomonas mobilis subsp. mobilis (strain ATCC 31821 / ZM4 / CP4) protein is 3-hydroxyacyl-[acyl-carrier-protein] dehydratase FabZ.